Here is a 189-residue protein sequence, read N- to C-terminus: Large ribosomal subunit protein bL9 (189 aa).

The protein belongs to the bacterial ribosomal protein bL9 family.

In terms of biological role, binds to the 23S rRNA. The protein is Large ribosomal subunit protein bL9 of Brucella anthropi (strain ATCC 49188 / DSM 6882 / CCUG 24695 / JCM 21032 / LMG 3331 / NBRC 15819 / NCTC 12168 / Alc 37) (Ochrobactrum anthropi).